A 256-amino-acid polypeptide reads, in one-letter code: Ubiquinone/menaquinone biosynthesis C-methyltransferase UbiE (256 aa).

S-adenosyl-L-methionine is bound by residues Thr-79, Asp-100, and 128–129 (DA).

This sequence belongs to the class I-like SAM-binding methyltransferase superfamily. MenG/UbiE family.

It catalyses the reaction a 2-demethylmenaquinol + S-adenosyl-L-methionine = a menaquinol + S-adenosyl-L-homocysteine + H(+). The enzyme catalyses a 2-methoxy-6-(all-trans-polyprenyl)benzene-1,4-diol + S-adenosyl-L-methionine = a 5-methoxy-2-methyl-3-(all-trans-polyprenyl)benzene-1,4-diol + S-adenosyl-L-homocysteine + H(+). It participates in quinol/quinone metabolism; menaquinone biosynthesis; menaquinol from 1,4-dihydroxy-2-naphthoate: step 2/2. Its pathway is cofactor biosynthesis; ubiquinone biosynthesis. Methyltransferase required for the conversion of demethylmenaquinol (DMKH2) to menaquinol (MKH2) and the conversion of 2-polyprenyl-6-methoxy-1,4-benzoquinol (DDMQH2) to 2-polyprenyl-3-methyl-6-methoxy-1,4-benzoquinol (DMQH2). The protein is Ubiquinone/menaquinone biosynthesis C-methyltransferase UbiE of Pseudomonas syringae pv. tomato (strain ATCC BAA-871 / DC3000).